A 246-amino-acid polypeptide reads, in one-letter code: 1-(5-phosphoribosyl)-5-[(5-phosphoribosylamino)methylideneamino] imidazole-4-carboxamide isomerase (246 aa).

Asp8 functions as the Proton acceptor in the catalytic mechanism. Catalysis depends on Asp131, which acts as the Proton donor.

This sequence belongs to the HisA/HisF family.

The protein resides in the cytoplasm. The catalysed reaction is 1-(5-phospho-beta-D-ribosyl)-5-[(5-phospho-beta-D-ribosylamino)methylideneamino]imidazole-4-carboxamide = 5-[(5-phospho-1-deoxy-D-ribulos-1-ylimino)methylamino]-1-(5-phospho-beta-D-ribosyl)imidazole-4-carboxamide. It functions in the pathway amino-acid biosynthesis; L-histidine biosynthesis; L-histidine from 5-phospho-alpha-D-ribose 1-diphosphate: step 4/9. The sequence is that of 1-(5-phosphoribosyl)-5-[(5-phosphoribosylamino)methylideneamino] imidazole-4-carboxamide isomerase from Lactococcus lactis subsp. cremoris (strain SK11).